We begin with the raw amino-acid sequence, 103 residues long: Stefin-3 (103 aa).

Positions 52 to 56 (QVVAG) match the Secondary area of contact motif.

This sequence belongs to the cystatin family.

The protein resides in the cytoplasm. In terms of biological role, this is an intracellular thiol proteinase inhibitor. The polypeptide is Stefin-3 (Stfa3) (Mus musculus (Mouse)).